A 129-amino-acid polypeptide reads, in one-letter code: Profilin-4 (129 aa).

It belongs to the profilin family.

Its subcellular location is the cytoplasm. In terms of biological role, involved in male fertility. Required for manchette development and acrosome biogenesis during spermiogenesis. Binds in vitro to phospholipids, including phosphatidylinositol 3-phosphate (PtdIns(3)P), phosphatidylinositol 4,5-bisphosphate (PtdIns(4,5)P2), phosphatidylinositol 4-phosphate (PtdIns(4)P) and phosphatidic acid (PA). Contrary to other profilin family members, does not bind to actin in vitro. The polypeptide is Profilin-4 (PFN4) (Bos taurus (Bovine)).